The chain runs to 225 residues: Large ribosomal subunit protein uL1 (225 aa).

It belongs to the universal ribosomal protein uL1 family. As to quaternary structure, part of the 50S ribosomal subunit.

Functionally, binds directly to 23S rRNA. The L1 stalk is quite mobile in the ribosome, and is involved in E site tRNA release. In terms of biological role, protein L1 is also a translational repressor protein, it controls the translation of the L11 operon by binding to its mRNA. The chain is Large ribosomal subunit protein uL1 from Rhodopirellula baltica (strain DSM 10527 / NCIMB 13988 / SH1).